Reading from the N-terminus, the 712-residue chain is Patatin-like phospholipase domain-containing protein ACLA_029670 (712 aa).

The segment covering 1 to 10 has biased composition (polar residues); that stretch reads MTSAEKSATR. The disordered stretch occupies residues 1–20; that stretch reads MTSAEKSATRNIYDPSALPD. Residues 85-105 form a helical membrane-spanning segment; it reads WPFLFIVFAWITVLGIAYALT. Residues 275-466 form the PNPLA domain; sequence LCLSGGATFA…RTDIPIKALN (192 aa). The GXSXG motif lies at 306 to 310; the sequence is GTSGG. Serine 308 functions as the Nucleophile in the catalytic mechanism. Aspartate 453 serves as the catalytic Proton acceptor. Residues 649–664 are compositionally biased toward basic and acidic residues; the sequence is FPERHSDYKDESHYTE. A disordered region spans residues 649–686; it reads FPERHSDYKDESHYTEVSDSLSTNSSRPHTPDARRGSI. Over residues 665 to 676 the composition is skewed to polar residues; sequence VSDSLSTNSSRP. Residues 677–686 are compositionally biased toward basic and acidic residues; the sequence is HTPDARRGSI.

Belongs to the PLPL family.

It is found in the membrane. In terms of biological role, probable lipid hydrolase. The sequence is that of Patatin-like phospholipase domain-containing protein ACLA_029670 from Aspergillus clavatus (strain ATCC 1007 / CBS 513.65 / DSM 816 / NCTC 3887 / NRRL 1 / QM 1276 / 107).